Reading from the N-terminus, the 946-residue chain is Bifunctional glutamine synthetase adenylyltransferase/adenylyl-removing enzyme (946 aa).

Positions 1–440 (MKPLSSPLQQ…VFNELIGDDE (440 aa)) are adenylyl removase. The interval 449-946 (SEQWRELWQD…ASWQKWLVEE (498 aa)) is adenylyl transferase.

This sequence belongs to the GlnE family. Mg(2+) is required as a cofactor.

The catalysed reaction is [glutamine synthetase]-O(4)-(5'-adenylyl)-L-tyrosine + phosphate = [glutamine synthetase]-L-tyrosine + ADP. The enzyme catalyses [glutamine synthetase]-L-tyrosine + ATP = [glutamine synthetase]-O(4)-(5'-adenylyl)-L-tyrosine + diphosphate. Functionally, involved in the regulation of glutamine synthetase GlnA, a key enzyme in the process to assimilate ammonia. When cellular nitrogen levels are high, the C-terminal adenylyl transferase (AT) inactivates GlnA by covalent transfer of an adenylyl group from ATP to specific tyrosine residue of GlnA, thus reducing its activity. Conversely, when nitrogen levels are low, the N-terminal adenylyl removase (AR) activates GlnA by removing the adenylyl group by phosphorolysis, increasing its activity. The regulatory region of GlnE binds the signal transduction protein PII (GlnB) which indicates the nitrogen status of the cell. The polypeptide is Bifunctional glutamine synthetase adenylyltransferase/adenylyl-removing enzyme (Shigella flexneri).